Here is a 219-residue protein sequence, read N- to C-terminus: MSSKLPTTLLRRPSALPSTTTYTAYSASRPTPPSCTAHGAQGQQIRNATFVPRHRRPYQFTQLVQLSDGSTFTVRTTMPTALYKSAKDSRNHLLWQPSDKSLKNVELDEAGKLAAFRERYGRGWDLDAKMTPEEEAAAAAALAAGGGAGVPGGKAAKKAAEEALLAKKKKEEEEAAKKAAEAEEADPFDSLTDLISGYATENMNPGLNFKETRHYGKKK.

Basic and acidic residues-rich tracts occupy residues 169-181 (KKEEEEAAKKAAE) and 210-219 (KETRHYGKKK). 2 disordered regions span residues 169–188 (KKEEEEAAKKAAEAEEADPF) and 200–219 (TENMNPGLNFKETRHYGKKK).

Belongs to the bacterial ribosomal protein bL31 family. Highly divergent. Component of the mitochondrial large ribosomal subunit (mt-LSU). Mature N.crassa 74S mitochondrial ribosomes consist of a small (37S) and a large (54S) subunit. The 37S small subunit contains a 16S ribosomal RNA (16S mt-rRNA) and 32 different proteins. The 54S large subunit contains a 23S rRNA (23S mt-rRNA) and 42 different proteins. bL31m bridges the mt-LSU central protuberance and the mt-SSU head.

It is found in the mitochondrion. Functionally, component of the mitochondrial ribosome (mitoribosome), a dedicated translation machinery responsible for the synthesis of mitochondrial genome-encoded proteins, including at least some of the essential transmembrane subunits of the mitochondrial respiratory chain. The mitoribosomes are attached to the mitochondrial inner membrane and translation products are cotranslationally integrated into the membrane. The protein is Large ribosomal subunit protein bL31m (mrpl36) of Neurospora crassa (strain ATCC 24698 / 74-OR23-1A / CBS 708.71 / DSM 1257 / FGSC 987).